The primary structure comprises 426 residues: MELTSFHRSSLLFLISLTLIILPTTTTSIGVNYGQIGDNLPSPTDVIPLIKSIGATKVKLYDANPQILKAFSNTGIEFIIGLGNEYLSKMKDPSKALTWIKQNVTPFLPATNITCITIGNEILALNDSSLTTNLLPAMQGVHSALITAGLSDQISVTTAHSLSILKSSFPPSAGEFQPDLLDSLTPILEFHRKTDSPFLINAYPFFAYKGNPKEVPLDFVLFQPNQGIVDPATGFHYDNMLFAQIDAVYSALAAAGFKSLRVEISETGWPSKGDDDEVGATPENAKRYNGNLIKMMMSGKKTKTPLKPNNDLSIYVFALFNENLKPGPTSERNYGLFKPDGTQAYSLGFALNDVVRGASGGGTGGGNSSSGGGRDKSPVFPVSPVAPDSASTGYLAISASPVTGKRKGKGAILSLVVSMLLARHLL.

Residues 1–30 (MELTSFHRSSLLFLISLTLIILPTTTTSIG) form the signal peptide. A glycan (N-linked (GlcNAc...) asparagine) is linked at N112. The active-site Proton donor is E121. N126 carries an N-linked (GlcNAc...) asparagine glycan. The active-site Nucleophile is the E266. Residues 360–372 (GGGTGGGNSSSGG) show a composition bias toward gly residues. Positions 360–389 (GGGTGGGNSSSGGGRDKSPVFPVSPVAPDS) are disordered. N367 carries an N-linked (GlcNAc...) asparagine glycan. A lipid anchor (GPI-anchor amidated serine) is attached at S398. The propeptide at 399 to 426 (ASPVTGKRKGKGAILSLVVSMLLARHLL) is removed in mature form.

The protein belongs to the glycosyl hydrolase 17 family.

The protein resides in the secreted. It localises to the cell wall. The protein localises to the cell membrane. The enzyme catalyses Hydrolysis of (1-&gt;3)-beta-D-glucosidic linkages in (1-&gt;3)-beta-D-glucans.. This is Glucan endo-1,3-beta-glucosidase 11 from Arabidopsis thaliana (Mouse-ear cress).